Reading from the N-terminus, the 144-residue chain is MLKGIHPALSPELLKTLAEMGHGDEIVLADTHFPAHSLHKNVIRADGISIDILLEAITPLFEFDAYVDAPLLMMKAVEGDSLDPNVETRYLNAIESAVGFTPNLTCLERFDFYTRAKQAYAVVVSGEIAKYGNIIIKKGVTPIL.

His-22 (proton donor) is an active-site residue. Residues Asp-30, Arg-109, and 131–133 contribute to the substrate site; that span reads YGN.

This sequence belongs to the RbsD / FucU family. FucU mutarotase subfamily. Homodecamer.

The protein resides in the cytoplasm. It carries out the reaction alpha-L-fucose = beta-L-fucose. It functions in the pathway carbohydrate metabolism; L-fucose metabolism. Involved in the anomeric conversion of L-fucose. In Haemophilus influenzae (strain PittEE), this protein is L-fucose mutarotase.